Reading from the N-terminus, the 256-residue chain is Probable sulfite/organosulfonate exporter TauE (256 aa).

8 helical membrane passes run 5–25, 33–53, 76–96, 103–123, 142–162, 172–190, 199–219, and 236–256; these read LLLP…FQTV, IVMG…AAVV, AVAA…LVLE, ATLL…SAAL, VFGG…IFQF, IRCA…RTLF, AAVC…TLLG, and FGVL…AWVL.

The protein belongs to the 4-toluene sulfonate uptake permease (TSUP) (TC 2.A.102) family.

The protein localises to the cell inner membrane. Could be a sulfite/organosulfonate exporter with a wide substrate range, including 3-sulfolactate and 3-sulfopyruvate. This chain is Probable sulfite/organosulfonate exporter TauE, found in Cupriavidus necator (strain ATCC 17699 / DSM 428 / KCTC 22496 / NCIMB 10442 / H16 / Stanier 337) (Ralstonia eutropha).